Reading from the N-terminus, the 1281-residue chain is Protein ETHYLENE-INSENSITIVE 2 (1281 aa).

The Cytoplasmic segment spans residues 1-21; it reads MDGQQLRSSESPASGGGGVTG. Residues 22–42 form a helical membrane-spanning segment; that stretch reads GGAPHLFHALGPALLISIGYI. The Extracellular portion of the chain corresponds to 43 to 61; that stretch reads DLGKWVAAVEAGSRFGLDL. Residues 62–82 traverse the membrane as a helical segment; the sequence is VLLALLFNFMAILCQYLAACI. The Cytoplasmic segment spans residues 83–112; the sequence is GTVTGRSLAEICHQEYSRPTCIFLGVQAGL. The helical transmembrane segment at 113–133 threads the bilayer; that stretch reads SLLTSELTMIFGIALGFNLLF. Residues 134–137 are Extracellular-facing; the sequence is EYDD. The chain crosses the membrane as a helical span at residues 138-158; sequence LITGICFATVVPNLLPYAISH. Over 159 to 163 the chain is Cytoplasmic; it reads LGKKM. Residues 164–184 form a helical membrane-spanning segment; sequence VGTLNACIAGFALLCYVLGLL. At 185 to 208 the chain is on the extracellular side; that stretch reads VSQPQIPLTTNVIFPKLSGESAYS. A helical membrane pass occupies residues 209–229; sequence LMALLGANVMAHNFYIHSSVV. Over 230-238 the chain is Cytoplasmic; it reads QGQKRSAFA. Residues 239–259 form a helical membrane-spanning segment; sequence VGALFHDHLFSVLFIFTGIFL. Residues 260–297 are Extracellular-facing; that stretch reads VNHVLMNSAAADSTNTLLLTFQDVVELMNQIFVNPMAP. A helical membrane pass occupies residues 298–318; it reads TIFLVVLLFSSHIISLTSAIG. The Cytoplasmic portion of the chain corresponds to 319-325; that stretch reads SQVISQH. A helical transmembrane segment spans residues 326–346; the sequence is LFGINLPLSGHHLILKAFAIV. Topologically, residues 347–362 are extracellular; the sequence is PALYCAKVAGAEGIYQ. The chain crosses the membrane as a helical span at residues 363–383; it reads LLIICQIIQAMLLPSSVVPLF. Residues 384–400 lie on the Cytoplasmic side of the membrane; that stretch reads RVASSRLIMGAHRVSLH. Residues 401 to 421 form a helical membrane-spanning segment; it reads LEILTFLAFLLMLFSNIIFMA. Residues 422–447 are Extracellular-facing; the sequence is EMLFGDSGWLNTLKGNTGSPVVFPST. Residues 448-468 form a helical membrane-spanning segment; that stretch reads VLITVACVSVAFSLYMAVTPL. The Cytoplasmic portion of the chain corresponds to 469–1281; that stretch reads KSGSHEAELQ…KRRLSSKGQQ (813 aa). 2 disordered regions span residues 540-565 and 593-665; these read IESDHDSQHSTAHTSTAPESCHSPSF and ESTV…NGSG. Positions 548–557 are enriched in polar residues; sequence HSTAHTSTAP. The segment covering 599–610 has biased composition (basic and acidic residues); sequence VDSKSTGERDIE.

The protein belongs to the NRAMP (TC 2.A.55) family. In terms of tissue distribution, expressed in roots, leaf sheaths, leaf blades, flowers, developing seeds, germinating seeds and young seedlings. Expressed in adventitious roots, vascular tissues of the seminal roots, lateral roots, the connecting region between vascular tissues and lateral roots, mature leaf, mature stem, tips of adventitious roots derived from the node, shoot apex, young panicle, anthers, pistil, stigma, ovary, seed coat and fruit coat pericarp.

It localises to the membrane. Its function is as follows. Central factor in ethylene signaling pathways that control development, senescence and grain size. Acts as a positive component of the ethylene-signaling pathway. The polypeptide is Protein ETHYLENE-INSENSITIVE 2 (Oryza sativa subsp. japonica (Rice)).